The chain runs to 172 residues: Small ribosomal subunit protein uS5 (172 aa).

The region spanning 17–80 (LREKMIAVNR…DEARRKMVKV (64 aa)) is the S5 DRBM domain.

Belongs to the universal ribosomal protein uS5 family. Part of the 30S ribosomal subunit. Contacts proteins S4 and S8.

Its function is as follows. With S4 and S12 plays an important role in translational accuracy. Functionally, located at the back of the 30S subunit body where it stabilizes the conformation of the head with respect to the body. This Ralstonia nicotianae (strain ATCC BAA-1114 / GMI1000) (Ralstonia solanacearum) protein is Small ribosomal subunit protein uS5.